A 196-amino-acid chain; its full sequence is Lipoprotein signal peptidase (196 aa).

3 helical membrane-spanning segments follow: residues 43–63 (LMLK…GISF), 75–95 (AIFL…MICS), and 97–117 (TIGS…NLID). Active-site residues include Asp-126 and Asp-144. The helical transmembrane segment at 135–155 (YSFPVFNLADCFITLGVIILI) threads the bilayer.

The protein belongs to the peptidase A8 family.

The protein resides in the cell inner membrane. The catalysed reaction is Release of signal peptides from bacterial membrane prolipoproteins. Hydrolyzes -Xaa-Yaa-Zaa-|-(S,diacylglyceryl)Cys-, in which Xaa is hydrophobic (preferably Leu), and Yaa (Ala or Ser) and Zaa (Gly or Ala) have small, neutral side chains.. It participates in protein modification; lipoprotein biosynthesis (signal peptide cleavage). In terms of biological role, this protein specifically catalyzes the removal of signal peptides from prolipoproteins. The protein is Lipoprotein signal peptidase of Rickettsia typhi (strain ATCC VR-144 / Wilmington).